Consider the following 429-residue polypeptide: Zinc metalloproteinase nas-17 (429 aa).

A signal peptide spans 1 to 21; sequence MFLRPSTLLLTLFLALVAGSA. Residue Asn-54 is glycosylated (N-linked (GlcNAc...) asparagine). A Peptidase M12A domain is found at 62 to 251; the sequence is RQITKIWKKW…VNINVRYSCG (190 aa). 4 cysteine pairs are disulfide-bonded: Cys-104–Cys-250, Cys-125–Cys-144, Cys-252–Cys-272, and Cys-274–Cys-283. His-152 is a binding site for Zn(2+). Residue Glu-153 is part of the active site. Zn(2+) contacts are provided by His-156 and His-162. The region spanning 245–284 is the EGF-like domain; sequence NVRYSCGCAKSLTCENGGYTNPSNCATCVCPTGFAGTLCN.

The cofactor is Zn(2+).

Its subcellular location is the secreted. Its function is as follows. Metalloprotease. This chain is Zinc metalloproteinase nas-17 (nas-17), found in Caenorhabditis elegans.